The sequence spans 132 residues: Large ribosomal subunit protein bL19 (132 aa).

Belongs to the bacterial ribosomal protein bL19 family.

In terms of biological role, this protein is located at the 30S-50S ribosomal subunit interface and may play a role in the structure and function of the aminoacyl-tRNA binding site. This is Large ribosomal subunit protein bL19 from Nitrosomonas europaea (strain ATCC 19718 / CIP 103999 / KCTC 2705 / NBRC 14298).